A 272-amino-acid polypeptide reads, in one-letter code: Thymidine phosphorylase (272 aa).

Belongs to the thymidine/pyrimidine-nucleoside phosphorylase family. In terms of assembly, homodimer.

It catalyses the reaction thymidine + phosphate = 2-deoxy-alpha-D-ribose 1-phosphate + thymine. Functionally, the enzymes which catalyze the reversible phosphorolysis of pyrimidine nucleosides are involved in the degradation of these compounds and in their utilization as carbon and energy sources, or in the rescue of pyrimidine bases for nucleotide synthesis. The protein is Thymidine phosphorylase (deoA) of Metamycoplasma hominis (Mycoplasma hominis).